The sequence spans 265 residues: MILVFDVGNTNIVLGVYRGKELIENWRIATDKDKSSDEYAMVIHQFFHYNGLNIHDVDDVIISSVVPNIMYSLENASRKLFKREPLIVGSGIKTGMNIKYDDPKQVGADRIVNAIAAYEKYGGPLIIVDFGTATTFCAVSEDGEYLGGAISPGIKISSEALFEKAAKLPRVELINPKKVICKNTVSSMQAGIVYGYIGLVENIVRNMKKELKSSSCKVIATGGLSTLIAGGTDSIDVVDKFLSLDGLNIIYERNRKDRILSNKKS.

Residue D6–V13 participates in ATP binding. Residues Y100 and G107 to R110 contribute to the substrate site. The active-site Proton acceptor is the D109. K(+) is bound at residue D129. Residue T132 coordinates ATP. T184 provides a ligand contact to substrate.

Belongs to the type III pantothenate kinase family. Homodimer. It depends on NH4(+) as a cofactor. Requires K(+) as cofactor.

The protein localises to the cytoplasm. It catalyses the reaction (R)-pantothenate + ATP = (R)-4'-phosphopantothenate + ADP + H(+). Its pathway is cofactor biosynthesis; coenzyme A biosynthesis; CoA from (R)-pantothenate: step 1/5. Functionally, catalyzes the phosphorylation of pantothenate (Pan), the first step in CoA biosynthesis. In Alkaliphilus oremlandii (strain OhILAs) (Clostridium oremlandii (strain OhILAs)), this protein is Type III pantothenate kinase.